The following is a 267-amino-acid chain: 5'-nucleotidase SurE (267 aa).

A divalent metal cation is bound by residues Asp-9, Asp-10, Ser-40, and Asn-97.

Belongs to the SurE nucleotidase family. The cofactor is a divalent metal cation.

The protein localises to the cytoplasm. It catalyses the reaction a ribonucleoside 5'-phosphate + H2O = a ribonucleoside + phosphate. Its function is as follows. Nucleotidase that shows phosphatase activity on nucleoside 5'-monophosphates. The chain is 5'-nucleotidase SurE from Helicobacter pylori (strain Shi470).